Reading from the N-terminus, the 46-residue chain is Large ribosomal subunit protein bL36 (46 aa).

This sequence belongs to the bacterial ribosomal protein bL36 family.

The chain is Large ribosomal subunit protein bL36 from Escherichia coli O7:K1 (strain IAI39 / ExPEC).